A 397-amino-acid polypeptide reads, in one-letter code: Succinate--CoA ligase [ADP-forming] subunit beta (397 aa).

Positions 9–254 (KALLRSYGAP…ETEEDPKELA (246 aa)) constitute an ATP-grasp domain. Residues K46, 53–55 (GRG), E109, S112, and E117 each bind ATP. Residues N209 and D223 each contribute to the Mg(2+) site. Substrate-binding positions include N274 and 331–333 (GIM).

The protein belongs to the succinate/malate CoA ligase beta subunit family. Heterotetramer of two alpha and two beta subunits. Requires Mg(2+) as cofactor.

It carries out the reaction succinate + ATP + CoA = succinyl-CoA + ADP + phosphate. It catalyses the reaction GTP + succinate + CoA = succinyl-CoA + GDP + phosphate. It participates in carbohydrate metabolism; tricarboxylic acid cycle; succinate from succinyl-CoA (ligase route): step 1/1. Its function is as follows. Succinyl-CoA synthetase functions in the citric acid cycle (TCA), coupling the hydrolysis of succinyl-CoA to the synthesis of either ATP or GTP and thus represents the only step of substrate-level phosphorylation in the TCA. The beta subunit provides nucleotide specificity of the enzyme and binds the substrate succinate, while the binding sites for coenzyme A and phosphate are found in the alpha subunit. This Cereibacter sphaeroides (strain ATCC 17025 / ATH 2.4.3) (Rhodobacter sphaeroides) protein is Succinate--CoA ligase [ADP-forming] subunit beta.